The chain runs to 359 residues: Fructose-1,6-bisphosphatase class 1 (359 aa).

The Mg(2+) site is built by E95, D117, L119, and D120. Residues 120-123 (DGSS) and N212 each bind substrate. A Mg(2+)-binding site is contributed by E284.

The protein belongs to the FBPase class 1 family. As to quaternary structure, homotetramer. The cofactor is Mg(2+).

It localises to the cytoplasm. The catalysed reaction is beta-D-fructose 1,6-bisphosphate + H2O = beta-D-fructose 6-phosphate + phosphate. It participates in carbohydrate biosynthesis; gluconeogenesis. This chain is Fructose-1,6-bisphosphatase class 1, found in Hydrogenophilus thermoluteolus (Pseudomonas hydrogenothermophila).